Here is a 100-residue protein sequence, read N- to C-terminus: Putative protein adenylyltransferase MJ1379 (100 aa).

The GSX(10)DXD motif motif lies at 31-45 (GSYARGEQTEESDID). Aspartate 43, aspartate 45, and aspartate 77 together coordinate Mg(2+).

The protein belongs to the MntA antitoxin family. As to quaternary structure, probably forms a complex with cognate toxin MJ1380. Requires Mg(2+) as cofactor.

It catalyses the reaction L-tyrosyl-[protein] + ATP = O-(5'-adenylyl)-L-tyrosyl-[protein] + diphosphate. It carries out the reaction O-(5'-adenylyl)-L-tyrosyl-[protein] + ATP = O-[5'-(adenylyl-(5'-&gt;3')-adenylyl)]-L-tyrosyl-[protein] + diphosphate. In terms of biological role, probable antitoxin component of a putative type VII toxin-antitoxin (TA) system. Neutralizes cognate toxic MJ1380 by di-AMPylation. The polypeptide is Putative protein adenylyltransferase MJ1379 (Methanocaldococcus jannaschii (strain ATCC 43067 / DSM 2661 / JAL-1 / JCM 10045 / NBRC 100440) (Methanococcus jannaschii)).